A 94-amino-acid polypeptide reads, in one-letter code: Small ribosomal subunit protein uS19 (94 aa).

Belongs to the universal ribosomal protein uS19 family.

Its function is as follows. Protein S19 forms a complex with S13 that binds strongly to the 16S ribosomal RNA. In Pelotomaculum thermopropionicum (strain DSM 13744 / JCM 10971 / SI), this protein is Small ribosomal subunit protein uS19.